The sequence spans 90 residues: RNA-binding protein Hfq (90 aa).

Residues 9 to 68 enclose the Sm domain; the sequence is EPFLNTLRKEKVPVSIYLVNGIKLQGQIESFDQFVVLLRNNVNQMVYKHAISTIVPARRV.

The protein belongs to the Hfq family. In terms of assembly, homohexamer.

Its function is as follows. RNA chaperone that binds small regulatory RNA (sRNAs) and mRNAs to facilitate mRNA translational regulation in response to envelope stress, environmental stress and changes in metabolite concentrations. Also binds with high specificity to tRNAs. The polypeptide is RNA-binding protein Hfq (Halorhodospira halophila (strain DSM 244 / SL1) (Ectothiorhodospira halophila (strain DSM 244 / SL1))).